The following is a 465-amino-acid chain: Fujikurins efflux protein FFUJ_12242 (465 aa).

A disordered region spans residues 1–66; sequence MATNVGGAVD…AAKAHDEGPP (66 aa). The segment covering 11-28 has biased composition (basic and acidic residues); that stretch reads NSRRSISDNRHDPEKPAE. The next 7 membrane-spanning stretches (helical) occupy residues 70–90, 115–135, 142–162, 175–195, 200–220, 231–251, and 274–294; these read TAAWMVVLGAWCCSFCSPGWI, WIPSLEIFFLFGLGPIVGIIF, PLIIGGTIFHVFGLMMASLAK, SAIGVACLYSPALACISTWFL, AAMGIMATGSSVGGVIFPIMI, WALRTAAFLILGLQVIACLTV, and PAFALLLAGIFILTYGMYIPI. Asn310 is a glycosylation site (N-linked (GlcNAc...) asparagine). 5 helical membrane-spanning segments follow: residues 314–334, 342–362, 368–388, 404–424, and 430–450; these read YLVAIMNAASLFGRLGAGYGA, MFIIACGVTGISNLAVWIPAT, IGYAIMFGFASGAFVSLVGAL, IVFLVISIPALTMAPIGGAIL, and GWVSLKVFAGVMCLVGSAIIL.

It belongs to the major facilitator superfamily. Monocarboxylate porter (TC 2.A.1.13) family.

It localises to the cell membrane. In terms of biological role, efflux pump that may be involved in the secretion of fujikurins. The chain is Fujikurins efflux protein FFUJ_12242 from Gibberella fujikuroi (strain CBS 195.34 / IMI 58289 / NRRL A-6831) (Bakanae and foot rot disease fungus).